A 447-amino-acid chain; its full sequence is Adenylosuccinate synthetase (447 aa).

GTP is bound by residues 35-41 and 63-65; these read GDEGKGK and GHT. Asp-36 (proton acceptor) is an active-site residue. Asp-36 and Gly-63 together coordinate Mg(2+). IMP-binding positions include 36–39, 61–64, Thr-153, Arg-167, Asn-245, Thr-260, and Arg-324; these read DEGK and NAGH. The Proton donor role is filled by His-64. Residue 320 to 326 participates in substrate binding; it reads VTTKRKR. GTP contacts are provided by residues Arg-326, 352–354, and 435–437; these read KLD and GVG.

This sequence belongs to the adenylosuccinate synthetase family. Homodimer. It depends on Mg(2+) as a cofactor.

The protein resides in the cytoplasm. The enzyme catalyses IMP + L-aspartate + GTP = N(6)-(1,2-dicarboxyethyl)-AMP + GDP + phosphate + 2 H(+). It functions in the pathway purine metabolism; AMP biosynthesis via de novo pathway; AMP from IMP: step 1/2. In terms of biological role, plays an important role in the de novo pathway and in the salvage pathway of purine nucleotide biosynthesis. Catalyzes the first committed step in the biosynthesis of AMP from IMP. Plays a role in the regulation of adult life span. This is Adenylosuccinate synthetase from Drosophila melanogaster (Fruit fly).